The following is a 274-amino-acid chain: 2,3,4,5-tetrahydropyridine-2,6-dicarboxylate N-succinyltransferase (274 aa).

The substrate site is built by R104 and D141.

This sequence belongs to the transferase hexapeptide repeat family. In terms of assembly, homotrimer.

Its subcellular location is the cytoplasm. The enzyme catalyses (S)-2,3,4,5-tetrahydrodipicolinate + succinyl-CoA + H2O = (S)-2-succinylamino-6-oxoheptanedioate + CoA. The protein operates within amino-acid biosynthesis; L-lysine biosynthesis via DAP pathway; LL-2,6-diaminopimelate from (S)-tetrahydrodipicolinate (succinylase route): step 1/3. This is 2,3,4,5-tetrahydropyridine-2,6-dicarboxylate N-succinyltransferase from Serratia proteamaculans (strain 568).